The primary structure comprises 199 residues: MVLVKICGLMHSEDILAVNTAGADFAGFVFAPGRHQISLEQALSLKQLLHPKIKTVGVFVNEPVAEILAIYQAGAIDVAQLHGKSTPTEITQFQQAGLKVIQVFERQAIDLTSMADYLMVDSGKGSGQLLNLKAIPHISRPLILAGGLTPLNVRQAVQLVQPTMVDVSSGVETNGHKDADKITQFIQQAKEDIIYEDIK.

The protein belongs to the TrpF family.

It catalyses the reaction N-(5-phospho-beta-D-ribosyl)anthranilate = 1-(2-carboxyphenylamino)-1-deoxy-D-ribulose 5-phosphate. It participates in amino-acid biosynthesis; L-tryptophan biosynthesis; L-tryptophan from chorismate: step 3/5. The polypeptide is N-(5'-phosphoribosyl)anthranilate isomerase (Lacticaseibacillus paracasei (strain ATCC 334 / BCRC 17002 / CCUG 31169 / CIP 107868 / KCTC 3260 / NRRL B-441) (Lactobacillus paracasei)).